Consider the following 348-residue polypeptide: Peptide-N(4)-(N-acetyl-beta-glucosaminyl)asparagine amidase (348 aa).

Residues cysteine 116, cysteine 119, cysteine 151, and cysteine 154 each contribute to the Zn(2+) site. The Nucleophile role is filled by cysteine 177. Catalysis depends on residues histidine 204 and aspartate 221. Residue glutamate 224 participates in substrate binding. Residues proline 311–lysine 348 are disordered. Residues glutamate 338–lysine 348 are compositionally biased toward basic and acidic residues.

This sequence belongs to the transglutaminase-like superfamily. PNGase family. Requires Zn(2+) as cofactor.

Its subcellular location is the cytoplasm. It catalyses the reaction Hydrolysis of an N(4)-(acetyl-beta-D-glucosaminyl)asparagine residue in which the glucosamine residue may be further glycosylated, to yield a (substituted) N-acetyl-beta-D-glucosaminylamine and a peptide containing an aspartate residue.. Its function is as follows. Specifically deglycosylates the denatured form of N-linked glycoproteins in the cytoplasm and assists their proteasome-mediated degradation. Cleaves the beta-aspartyl-glucosamine (GlcNAc) of the glycan and the amide side chain of Asn, converting Asn to Asp. Prefers proteins containing high-mannose over those bearing complex type oligosaccharides. Can recognize misfolded proteins in the endoplasmic reticulum that are exported to the cytosol to be destroyed and deglycosylate them, while it has no activity toward native proteins. Deglycosylation is a prerequisite for subsequent proteasome-mediated degradation of some, but not all, misfolded glycoproteins. The chain is Peptide-N(4)-(N-acetyl-beta-glucosaminyl)asparagine amidase (PNG1) from Candida glabrata (strain ATCC 2001 / BCRC 20586 / JCM 3761 / NBRC 0622 / NRRL Y-65 / CBS 138) (Yeast).